A 301-amino-acid polypeptide reads, in one-letter code: tRNA dimethylallyltransferase (301 aa).

Gly5 to Ser12 serves as a coordination point for ATP. Thr7–Ser12 contributes to the substrate binding site. The tract at residues Asp30–Gln33 is interaction with substrate tRNA.

It belongs to the IPP transferase family. Monomer. Mg(2+) is required as a cofactor.

It catalyses the reaction adenosine(37) in tRNA + dimethylallyl diphosphate = N(6)-dimethylallyladenosine(37) in tRNA + diphosphate. In terms of biological role, catalyzes the transfer of a dimethylallyl group onto the adenine at position 37 in tRNAs that read codons beginning with uridine, leading to the formation of N6-(dimethylallyl)adenosine (i(6)A). This Rhodopseudomonas palustris (strain TIE-1) protein is tRNA dimethylallyltransferase.